We begin with the raw amino-acid sequence, 230 residues long: Ubiquitin carboxyl-terminal hydrolase isozyme L3 (230 aa).

Residues 5 to 229 (RWLPLEANPE…LRFNAIALSA (225 aa)) enclose the UCH catalytic domain. The segment at 8-13 (PLEANP) is interaction with ubiquitin. Residue Cys95 is the Nucleophile of the active site. Position 130 is a phosphoserine (Ser130). Positions 152-159 (AHEGQTEA) are interaction with ubiquitin. Crossover loop which restricts access of large ubiquitin adducts to the active site. The active-site Proton donor is the His169. Residues 219–224 (ELRFNA) form an interaction with ubiquitin region.

It belongs to the peptidase C12 family. Preferentially binds diubiquitin; the interaction does not hydrolyze diubiquitin but, in vitro, inhibits the hydrolyzing activity on other substrates.

The protein resides in the cytoplasm. The enzyme catalyses Thiol-dependent hydrolysis of ester, thioester, amide, peptide and isopeptide bonds formed by the C-terminal Gly of ubiquitin (a 76-residue protein attached to proteins as an intracellular targeting signal).. With respect to regulation, inhibited by monoubiquitin and diubiquitin. Its function is as follows. Deubiquitinating enzyme (DUB) that controls levels of cellular ubiquitin through processing of ubiquitin precursors and ubiquitinated proteins. Thiol protease that recognizes and hydrolyzes a peptide bond at the C-terminal glycine of either ubiquitin or NEDD8. Has a 10-fold preference for Arg and Lys at position P3''. Deubiquitinates ENAC in apical compartments, thereby regulating apical membrane recycling. Indirectly increases the phosphorylation of IGFIR, AKT and FOXO1 and promotes insulin-signaling and insulin-induced adipogenesis. Required for stress-response retinal, skeletal muscle and germ cell maintenance. May be involved in working memory. Can hydrolyze UBB(+1), a mutated form of ubiquitin which is not effectively degraded by the proteasome. The polypeptide is Ubiquitin carboxyl-terminal hydrolase isozyme L3 (UCHL3) (Bos taurus (Bovine)).